We begin with the raw amino-acid sequence, 238 residues long: MNKNIIIKSIAALTILTSVTGVGTTMVEGIQQTAKAEHNVKLIKNTNVAPYNGIVSIGSGTGFIVGKNTIVTNKHVVAGMEIGAQIIAHPNGEYNNGGFYKVKKIVRYAGQEDIAILHVEDKAIHPKNRNFKDYTGILKIASEAKENERISIVGYPEPYINKFQMYESTGKVLSVKGNMIISDAFVEPGNSGSAVFNSKYEVVGVHFGGNGPANKSTKGYGVYFSPEIKKFIADNLIK.

The N-terminal stretch at methionine 1–alanine 36 is a signal peptide. Residues histidine 75, aspartate 113, and serine 191 each act as charge relay system in the active site.

Belongs to the peptidase S1B family.

Its subcellular location is the secreted. The polypeptide is Serine protease SplE (splE) (Staphylococcus aureus).